The sequence spans 37 residues: Large ribosomal subunit protein bL36 (37 aa).

Belongs to the bacterial ribosomal protein bL36 family.

This Metamycoplasma arthritidis (strain 158L3-1) (Mycoplasma arthritidis) protein is Large ribosomal subunit protein bL36.